A 227-amino-acid chain; its full sequence is Lipoprotein-releasing system ATP-binding protein LolD (227 aa).

Residues 7–227 (LSCRDLGKSY…HLQEGHLVAI (221 aa)) form the ABC transporter domain. Residue 43–50 (GTSGSGKS) coordinates ATP.

It belongs to the ABC transporter superfamily. Lipoprotein translocase (TC 3.A.1.125) family. In terms of assembly, the complex is composed of two ATP-binding proteins (LolD) and two transmembrane proteins (LolC and LolE).

It localises to the cell inner membrane. Functionally, part of the ABC transporter complex LolCDE involved in the translocation of mature outer membrane-directed lipoproteins, from the inner membrane to the periplasmic chaperone, LolA. Responsible for the formation of the LolA-lipoprotein complex in an ATP-dependent manner. This chain is Lipoprotein-releasing system ATP-binding protein LolD, found in Pseudomonas fluorescens (strain ATCC BAA-477 / NRRL B-23932 / Pf-5).